A 94-amino-acid polypeptide reads, in one-letter code: Immune protein Tsi6 (94 aa).

Functionally, immunity protein that plays a role in preventing early activation of toxin Tse6. This is Immune protein Tsi6 from Pseudomonas aeruginosa (strain ATCC 15692 / DSM 22644 / CIP 104116 / JCM 14847 / LMG 12228 / 1C / PRS 101 / PAO1).